Here is a 427-residue protein sequence, read N- to C-terminus: 3-phosphoshikimate 1-carboxyvinyltransferase (427 aa).

3-phosphoshikimate-binding residues include lysine 22, serine 23, and arginine 27. Lysine 22 lines the phosphoenolpyruvate pocket. Phosphoenolpyruvate contacts are provided by glycine 96 and arginine 124. Serine 169, serine 170, glutamine 171, serine 197, aspartate 313, asparagine 336, and lysine 340 together coordinate 3-phosphoshikimate. Position 171 (glutamine 171) interacts with phosphoenolpyruvate. Residue aspartate 313 is the Proton acceptor of the active site. Positions 344, 386, and 411 each coordinate phosphoenolpyruvate.

Belongs to the EPSP synthase family. Monomer.

It is found in the cytoplasm. It catalyses the reaction 3-phosphoshikimate + phosphoenolpyruvate = 5-O-(1-carboxyvinyl)-3-phosphoshikimate + phosphate. Its pathway is metabolic intermediate biosynthesis; chorismate biosynthesis; chorismate from D-erythrose 4-phosphate and phosphoenolpyruvate: step 6/7. In terms of biological role, catalyzes the transfer of the enolpyruvyl moiety of phosphoenolpyruvate (PEP) to the 5-hydroxyl of shikimate-3-phosphate (S3P) to produce enolpyruvyl shikimate-3-phosphate and inorganic phosphate. The polypeptide is 3-phosphoshikimate 1-carboxyvinyltransferase (Escherichia coli O1:K1 / APEC).